The primary structure comprises 156 residues: Small ribosomal subunit protein uS7 (156 aa).

The protein belongs to the universal ribosomal protein uS7 family. In terms of assembly, part of the 30S ribosomal subunit. Contacts proteins S9 and S11.

Functionally, one of the primary rRNA binding proteins, it binds directly to 16S rRNA where it nucleates assembly of the head domain of the 30S subunit. Is located at the subunit interface close to the decoding center, probably blocks exit of the E-site tRNA. This chain is Small ribosomal subunit protein uS7, found in Mycobacterium avium (strain 104).